Consider the following 606-residue polypeptide: Large subunit GTPase 1 homolog (606 aa).

The interval 1-21 (MGKKNKGGAPNLGRQLIKDRF) is disordered. Positions 165 to 395 (WRQLWRVVER…LCDCPGLVMP (231 aa)) constitute a CP-type G domain. 213–216 (NKSD) contacts GTP. Phosphoserine is present on residues S276 and S279. GTP is bound by residues 344–351 (GYPNVGKS) and 388–391 (DCPG). The tract at residues 574 to 606 (LVAGNDPAAKPWRHVKKERREKLRKKFSHLDEH) is disordered. The span at 584-600 (PWRHVKKERREKLRKKF) shows a compositional bias: basic residues.

The protein belongs to the TRAFAC class YlqF/YawG GTPase family. LSG1 subfamily. In terms of tissue distribution, expressed in larval serotonergic neurons.

Its subcellular location is the cytoplasm. Functionally, GTPase required for the nuclear export of the 60S ribosomal subunit. Probably acts by mediating the release of Nmd3 from the 60S ribosomal subunit after export into the cytoplasm. Regulator of body size; acts in serotonergic neurons to regulate insulin signaling and thus exerts global growth control. This chain is Large subunit GTPase 1 homolog (Ns3), found in Drosophila melanogaster (Fruit fly).